The following is a 291-amino-acid chain: 4-hydroxy-tetrahydrodipicolinate synthase (291 aa).

Thr47 serves as a coordination point for pyruvate. Tyr134 (proton donor/acceptor) is an active-site residue. Lys162 serves as the catalytic Schiff-base intermediate with substrate. A pyruvate-binding site is contributed by Ile205.

Belongs to the DapA family. As to quaternary structure, homotetramer; dimer of dimers.

Its subcellular location is the cytoplasm. It catalyses the reaction L-aspartate 4-semialdehyde + pyruvate = (2S,4S)-4-hydroxy-2,3,4,5-tetrahydrodipicolinate + H2O + H(+). The protein operates within amino-acid biosynthesis; L-lysine biosynthesis via DAP pathway; (S)-tetrahydrodipicolinate from L-aspartate: step 3/4. Functionally, catalyzes the condensation of (S)-aspartate-beta-semialdehyde [(S)-ASA] and pyruvate to 4-hydroxy-tetrahydrodipicolinate (HTPA). The polypeptide is 4-hydroxy-tetrahydrodipicolinate synthase (Methanoculleus marisnigri (strain ATCC 35101 / DSM 1498 / JR1)).